The chain runs to 770 residues: Shutoff protein (770 aa).

Disordered stretches follow at residues 1-20 (MEED…PNSE) and 30-49 (EEEN…PEDG). Over residues 10-19 (DSETLTTPNS) the composition is skewed to polar residues. Residues 248–312 (VMDQVLIKRA…AVLVTVELEC (65 aa)) are binding to host EIF4G. Positions 315–433 (RFFANPQTLR…ELWTSFDERT (119 aa)) constitute an RRM domain. Phosphotyrosine; by host occurs at positions 332 and 647. A disordered region spans residues 661 to 770 (LSAAASCRSQ…TATMFTESQP (110 aa)). Residues 726-739 (GGPRGRGGRNHRQR) show a composition bias toward basic residues. A compositionally biased stretch (polar residues) spans 742 to 755 (TIFQKTRSEPTSEN).

This sequence belongs to the adenoviridae shutoff protein family. As to quaternary structure, monomer. Interacts with hexon protein; this interaction allows chaperoning and trimerization of hexon proteins. Interacts (via N-terminus) with host initiation factor EIF4G (via C-terminus). Interacts (via RRM domain) with viral mRNAs that contain the tripartite leader; this interaction allows ribosome shunting and expression of viral late mRNAs. Might be cleaved by the viral protease. In terms of processing, phosphorylated. Tyrosine phosphorylation enhances preferential binding to tripartite leader mRNAs and allows ribosome shunting. Post-translationally, methylated. Asymmetric dimethylation by host PRMT1 of the Arg/Gly-rich region may regulate shutoff protein binding to hexon and promote the capsid assembly in the nucleus.

The protein localises to the host cytoplasm. Functionally, protein that inhibits host translation while promoting late viral translation by ribosome shunting. Blocks host cap-dependent translation by binding to eIF4G, displacing MKNK1 from cap initiation complexes and preventing EIF4E phosphorylation. Binds to the tripartite leader sequence of viral late mRNAs and recruits host eIF4G, PABPC1/poly-A binding protein and 40S ribosomes subunits on viral mRNAs, allowing ribosome shunting and efficient translation of late viral mRNAs even though conventional translation via ribosome scanning from the cap has been shut off in the host cell. During assembly, acts as a chaperone protein that helps hexon proteins assembly into trimers. This chain is Shutoff protein, found in Human adenovirus F serotype 40 (HAdV-40).